Here is a 341-residue protein sequence, read N- to C-terminus: Radial spoke head 14 homolog (341 aa).

ARM repeat units follow at residues 16–55, 57–96, 99–138, 139–178, 180–217, 219–258, 260–300, and 302–339; these read PTKAAIAYGCRALSKLNEELQSRDLLTRQKALVALCDLMH, PEYVYEAINIGCLESLKTLLQDDDNLVRIKTTEVLYIMAT, VGRVGFLKHDIIQALSLLLSDHQTLCRENLHQAYKHLAQL, PKGAQGIVQSGLIPSLVRKLQKEEDHIQEIILDTLALCLQ, DATEALESQAVPCLKEKLLSQNSEIRSKAARALIAISI, LDGKNQVWKNKVIPILVTLLSDTDEEVKANAAGALMHATV, TEGK…MLAE, and PEGRKLLLSHVPIFRYLLAHKNEAIQRAAEVAIKVIEW.

This sequence belongs to the flagellar radial spoke RSP14 family. Component of the axonemal radial spoke complex 1 (RS1), at least composed of spoke head proteins RSPH1, RSPH3, RSPH9 and the cilia-specific component RSPH4A or sperm-specific component RSPH6A, spoke stalk proteins RSPH14, DNAJB13, DYDC1, ROPN1L and NME5, and the anchor protein IQUB.

The protein resides in the cytoplasm. It is found in the cytoskeleton. The protein localises to the flagellum axoneme. Functionally, functions as part of axonemal radial spoke complexes that play an important part in the motility of sperm and cilia. The chain is Radial spoke head 14 homolog from Mus musculus (Mouse).